Consider the following 218-residue polypeptide: Adenylate kinase (218 aa).

An ATP-binding site is contributed by 10-15 (GAGKGT). The segment at 30 to 59 (STGDMLRAAVKEGSELGLKVKEIMNSGGLV) is NMP. AMP is bound by residues threonine 31, arginine 36, 57 to 59 (GLV), 85 to 88 (GFPR), and glutamine 92. Residues 122 to 159 (GRRVHPGSGRVYHVDYNPPKEEGKDDVTGEALIQRDDD) are LID. Residues arginine 123 and 132-133 (VY) contribute to the ATP site. AMP is bound by residues arginine 156 and arginine 167. Glycine 203 is a binding site for ATP.

Belongs to the adenylate kinase family. In terms of assembly, monomer.

Its subcellular location is the cytoplasm. It catalyses the reaction AMP + ATP = 2 ADP. The protein operates within purine metabolism; AMP biosynthesis via salvage pathway; AMP from ADP: step 1/1. Catalyzes the reversible transfer of the terminal phosphate group between ATP and AMP. Plays an important role in cellular energy homeostasis and in adenine nucleotide metabolism. In Chromohalobacter salexigens (strain ATCC BAA-138 / DSM 3043 / CIP 106854 / NCIMB 13768 / 1H11), this protein is Adenylate kinase.